The following is a 79-amino-acid chain: D-alanyl carrier protein (79 aa).

Residues 1–77 (MDTKQGVLDI…KIVAKVESLE (77 aa)) enclose the Carrier domain. Position 35 is an O-(pantetheine 4'-phosphoryl)serine (S35).

It belongs to the DltC family. Post-translationally, 4'-phosphopantetheine is transferred from CoA to a specific serine of apo-DCP.

Its subcellular location is the cytoplasm. Its pathway is cell wall biogenesis; lipoteichoic acid biosynthesis. In terms of biological role, carrier protein involved in the D-alanylation of lipoteichoic acid (LTA). The loading of thioester-linked D-alanine onto DltC is catalyzed by D-alanine--D-alanyl carrier protein ligase DltA. The DltC-carried D-alanyl group is further transferred to cell membrane phosphatidylglycerol (PG) by forming an ester bond, probably catalyzed by DltD. D-alanylation of LTA plays an important role in modulating the properties of the cell wall in Gram-positive bacteria, influencing the net charge of the cell wall. The sequence is that of D-alanyl carrier protein from Lactobacillus helveticus (strain DPC 4571).